We begin with the raw amino-acid sequence, 266 residues long: 5'-nucleotidase SurE (266 aa).

A divalent metal cation contacts are provided by aspartate 10, aspartate 11, serine 41, and asparagine 97.

It belongs to the SurE nucleotidase family. It depends on a divalent metal cation as a cofactor.

Its subcellular location is the cytoplasm. The enzyme catalyses a ribonucleoside 5'-phosphate + H2O = a ribonucleoside + phosphate. Functionally, nucleotidase that shows phosphatase activity on nucleoside 5'-monophosphates. The sequence is that of 5'-nucleotidase SurE from Methanocella arvoryzae (strain DSM 22066 / NBRC 105507 / MRE50).